The following is a 232-amino-acid chain: Ribose-5-phosphate isomerase A (232 aa).

Residues 31 to 34, 88 to 91, and 101 to 104 contribute to the substrate site; these read TGST, DGAD, and KGGG. The active-site Proton acceptor is the glutamate 110. Lysine 128 contacts substrate.

The protein belongs to the ribose 5-phosphate isomerase family. Homodimer.

The enzyme catalyses aldehydo-D-ribose 5-phosphate = D-ribulose 5-phosphate. Its pathway is carbohydrate degradation; pentose phosphate pathway; D-ribose 5-phosphate from D-ribulose 5-phosphate (non-oxidative stage): step 1/1. Catalyzes the reversible conversion of ribose-5-phosphate to ribulose 5-phosphate. The protein is Ribose-5-phosphate isomerase A of Lactobacillus gasseri (strain ATCC 33323 / DSM 20243 / BCRC 14619 / CIP 102991 / JCM 1131 / KCTC 3163 / NCIMB 11718 / NCTC 13722 / AM63).